The primary structure comprises 426 residues: Glutamyl-tRNA reductase (426 aa).

Substrate is bound by residues 52 to 55 (TCNR), S110, 115 to 117 (EYE), and Q121. C53 (nucleophile) is an active-site residue. 190 to 195 (GAGEMA) provides a ligand contact to NADP(+).

It belongs to the glutamyl-tRNA reductase family. Homodimer.

It carries out the reaction (S)-4-amino-5-oxopentanoate + tRNA(Glu) + NADP(+) = L-glutamyl-tRNA(Glu) + NADPH + H(+). Its pathway is porphyrin-containing compound metabolism; protoporphyrin-IX biosynthesis; 5-aminolevulinate from L-glutamyl-tRNA(Glu): step 1/2. In terms of biological role, catalyzes the NADPH-dependent reduction of glutamyl-tRNA(Glu) to glutamate 1-semialdehyde (GSA). This chain is Glutamyl-tRNA reductase, found in Saccharolobus solfataricus (strain ATCC 35092 / DSM 1617 / JCM 11322 / P2) (Sulfolobus solfataricus).